The following is a 171-amino-acid chain: 3-hydroxydecanoyl-[acyl-carrier-protein] dehydratase (171 aa).

Residue H70 is part of the active site.

Belongs to the thioester dehydratase family. FabA subfamily. As to quaternary structure, homodimer.

Its subcellular location is the cytoplasm. It catalyses the reaction a (3R)-hydroxyacyl-[ACP] = a (2E)-enoyl-[ACP] + H2O. It carries out the reaction (3R)-hydroxydecanoyl-[ACP] = (2E)-decenoyl-[ACP] + H2O. The enzyme catalyses (2E)-decenoyl-[ACP] = (3Z)-decenoyl-[ACP]. Its pathway is lipid metabolism; fatty acid biosynthesis. In terms of biological role, necessary for the introduction of cis unsaturation into fatty acids. Catalyzes the dehydration of (3R)-3-hydroxydecanoyl-ACP to E-(2)-decenoyl-ACP and then its isomerization to Z-(3)-decenoyl-ACP. Can catalyze the dehydratase reaction for beta-hydroxyacyl-ACPs with saturated chain lengths up to 16:0, being most active on intermediate chain length. This is 3-hydroxydecanoyl-[acyl-carrier-protein] dehydratase from Shewanella putrefaciens (strain CN-32 / ATCC BAA-453).